The chain runs to 142 residues: MKTFVAKPETVKRDWYVVDATGKTLGRLATELASRLRGKHKAEYTPHVDTGDYIIVINADKVAVTGRKETDKVYYWHTGYVGGIKQATFKEMIARRPEAVIEIAVKGMLPKGPLGRAMFRKLKVYAGSQHEHAAQQPQVLDI.

It belongs to the universal ribosomal protein uL13 family. As to quaternary structure, part of the 50S ribosomal subunit.

Functionally, this protein is one of the early assembly proteins of the 50S ribosomal subunit, although it is not seen to bind rRNA by itself. It is important during the early stages of 50S assembly. The chain is Large ribosomal subunit protein uL13 from Mannheimia succiniciproducens (strain KCTC 0769BP / MBEL55E).